The chain runs to 863 residues: MAGPRGALLAWCRRQCEGYRGVEIRDLSSSFRDGLAFCAILHRHRPDLLDFDSLSKDNVFENNRLAFEVAEKELGIPALLDPNDMVSMSVPDCLSIMTYVSQYYNHFCSPGQAGVSPPRKGLAPCSPPSVAPTPVEPEDVAQGEELSSGSLSEQGTGQTPSSTCAACQQHVHLVQRYLADGRLYHRHCFRCRRCSSTLLPGAYENGPEEGTFVCAEHCARLGPGTRSGTRPGPFSQPKQQHQQQLAEDAKDVPGGGPSSSAPAGAEADGPKASPEARPQIPTKPRVPGKLQELASPPAGRPTPAPRKASESTTPAPPTPRPRSSLQQENLVEQAGSSSLVNGRLHELPVPKPRGTPKPSEGTPAPRKDPPWITLVQAEPKKKPAPLPPSSSPGPPSQDSRQVENGGTEEVAQPSPTASLESKPYNPFEEEEEDKEEEAPAAPSLATSPALGHPESTPKSLHPWYGITPTSSPKTKKRPAPRAPSASPLALHASRLSHSEPPSATPSPALSVESLSSESASQTAGAELLEPPAVPKSSSEPAVHAPGTPGNPVSLSTNSSLASSGELVEPRVEQMPQASPGLAPRTRGSSGPQPAKPCSGATPTPLLLVGDRSPVPSPGSSSPQLQVKSSCKENPFNRKPSPAASPATKKATKGSKPVRPPAPGHGFPLIKRKVQADQYIPEEDIHGEMDTIERRLDALEHRGVLLEEKLRGGLNEGREDDMLVDWFKLIHEKHLLVRRESELIYVFKQQNLEQRQADVEYELRCLLNKPEKDWTEEDRAREKVLMQELVTLIEQRNAIINCLDEDRQREEEEDKMLEAMIKKKEFQREAEPEGKKKGKFKTMKMLKLLGNKRDAKSKSPRDKS.

In terms of domain architecture, Calponin-homology (CH) spans 2–108 (AGPRGALLAW…YVSQYYNHFC (107 aa)). Disordered stretches follow at residues 119–162 (RKGL…TPSS) and 224–670 (GTRS…PLIK). Residues 125–135 (CSPPSVAPTPV) are compositionally biased toward pro residues. 2 stretches are compositionally biased toward low complexity: residues 143-159 (GEEL…TGQT) and 224-244 (GTRS…HQQQ). An LIM zinc-binding domain is found at 162 to 225 (STCAACQQHV…EHCARLGPGT (64 aa)). 2 positions are modified to phosphoserine: Ser295 and Ser309. At Thr318 the chain carries Phosphothreonine. The span at 325 to 340 (LQQENLVEQAGSSSLV) shows a compositional bias: polar residues. The segment covering 384 to 395 (APLPPSSSPGPP) has biased composition (pro residues). Ser391 carries the post-translational modification Phosphoserine. Positions 425-427 (NPF) match the NPF1 motif. A compositionally biased stretch (acidic residues) spans 427 to 438 (FEEEEEDKEEEA). Residues 439-450 (PAAPSLATSPAL) are compositionally biased toward low complexity. Residues Thr467 and Thr469 each carry the phosphothreonine modification. A phosphoserine mark is found at Ser470, Ser471, Ser484, and Ser486. Composition is skewed to low complexity over residues 482–495 (APSA…ASRL), 505–520 (PSPA…ESAS), and 553–566 (SLST…SGEL). Residues Ser578 and Ser621 each carry the phosphoserine modification. The NPF2 signature appears at 633-635 (NPF). Residues 638–656 (KPSPAASPATKKATKGSKP) are compositionally biased toward low complexity. The interval 652-863 (KGSKPVRPPA…AKSKSPRDKS (212 aa)) is mediates the interaction with RAB13 and RAB35 and intramolecular interaction with the CH domain. The region spanning 671-818 (RKVQADQYIP…EEEEDKMLEA (148 aa)) is the bMERB domain. Positions 682–711 (EDIHGEMDTIERRLDALEHRGVLLEEKLRG) form a coiled coil. The tract at residues 700 to 863 (HRGVLLEEKL…AKSKSPRDKS (164 aa)) is necessary and sufficient to associate with tubular recycling endosome membranes, mediate phosphatidic acid-binding and membrane tubulation. Residue Ser740 is modified to Phosphoserine. The stretch at 785-830 (MQELVTLIEQRNAIINCLDEDRQREEEEDKMLEAMIKKKEFQREAE) forms a coiled coil.

Homooligomer. Interacts (via NPF1 motif) with EHD1 (via EH domain); the interaction is direct and probably recruits EHD1 to membranes. Interacts with EHD3 (via EH domain). Interacts with RAB35 (GTP-bound form); the interaction is direct and probably recruits MICALL1 to membranes. Interacts with ACAP2; the interaction is indirect through RAB35. Interacts with RAB8A (GTP-bound form); regulates RAB8A association with recycling endosomes. Interacts with RAB13 (GTP-bound form). Interacts with ARF6 (GTP-bound form). Interacts with PACSIN2 (via the SH3 domain). Interacts with DPYSL2.

The protein localises to the recycling endosome membrane. It localises to the late endosome membrane. Its subcellular location is the cell projection. It is found in the cilium membrane. The protein resides in the cytoplasm. The protein localises to the cytoskeleton. It localises to the microtubule organizing center. Its subcellular location is the centrosome. It is found in the centriole. Lipid-binding protein with higher affinity for phosphatidic acid, a lipid enriched in recycling endosome membranes. On endosome membranes, acts as a downstream effector of Rab proteins recruiting cytosolic proteins to regulate membrane tubulation. Involved in a late step of receptor-mediated endocytosis regulating for instance endocytosed-EGF receptor trafficking. Alternatively, regulates slow endocytic recycling of endocytosed proteins back to the plasma membrane. Also involved in cargo protein delivery to the plasma membrane. Plays a role in ciliogenesis coordination, recruits EHD1 to primary cilium where it is anchored to the centriole through interaction with tubulins. May indirectly play a role in neurite outgrowth. The sequence is that of MICAL-like protein 1 (MICALL1) from Homo sapiens (Human).